The following is an 810-amino-acid chain: Eukaryotic translation initiation factor 3 subunit C (810 aa).

Polar residues predominate over residues 1-11 (MSRFFATNYNY). Residues 1–98 (MSRFFATNYN…DSDESDEEDG (98 aa)) are disordered. Residues 12–33 (DETSSSSEEDLLSSSEELLSSS) are compositionally biased toward low complexity. Positions 34–58 (EEGELSDDSLFNDESESESDFDSDD) are enriched in acidic residues. In terms of domain architecture, PCI spans 605-780 (YHQHINLDLV…TYIVIEKGDE (176 aa)).

This sequence belongs to the eIF-3 subunit C family. In terms of assembly, component of the eukaryotic translation initiation factor 3 (eIF-3) complex.

The protein localises to the cytoplasm. In terms of biological role, component of the eukaryotic translation initiation factor 3 (eIF-3) complex, which is involved in protein synthesis of a specialized repertoire of mRNAs and, together with other initiation factors, stimulates binding of mRNA and methionyl-tRNAi to the 40S ribosome. The eIF-3 complex specifically targets and initiates translation of a subset of mRNAs involved in cell proliferation. The sequence is that of Eukaryotic translation initiation factor 3 subunit C from Candida glabrata (strain ATCC 2001 / BCRC 20586 / JCM 3761 / NBRC 0622 / NRRL Y-65 / CBS 138) (Yeast).